We begin with the raw amino-acid sequence, 230 residues long: Large ribosomal subunit protein uL1 (230 aa).

It belongs to the universal ribosomal protein uL1 family. As to quaternary structure, part of the 50S ribosomal subunit.

Its function is as follows. Binds directly to 23S rRNA. The L1 stalk is quite mobile in the ribosome, and is involved in E site tRNA release. Functionally, protein L1 is also a translational repressor protein, it controls the translation of the L11 operon by binding to its mRNA. The polypeptide is Large ribosomal subunit protein uL1 (Nitrobacter hamburgensis (strain DSM 10229 / NCIMB 13809 / X14)).